The primary structure comprises 198 residues: Non-structural protein 5 (198 aa).

Low complexity predominate over residues 17–30; sequence IFKNESSSTTSTLS. Disordered stretches follow at residues 17-36 and 53-73; these read IFKNESSSTTSTLSGKSIGR and LSKSPEDIGPSDSASNDPLTS. Residues 64-73 are compositionally biased toward polar residues; that stretch reads DSASNDPLTS. S67 is subject to Phosphoserine; by host CK1. D92 contributes to the Mg(2+) binding site. Residues 129 to 167 form a disordered region; sequence STDQKREKSKKDHKNGKHYPKIEAESDSDDYVLDDSDSD. Over residues 153 to 166 the composition is skewed to acidic residues; that stretch reads ESDSDDYVLDDSDS. Phosphoserine; by host occurs at positions 154, 156, 164, and 166.

The protein belongs to the rotavirus NSP5 family. As to quaternary structure, homodimer. Interacts with VP1. Interacts with VP2. Interacts with NSP2; this interaction leads to up-regulation of NSP5 hyperphosphorylation and formation of virus factories. Interacts with NSP6. Participates in the selective exclusion of host proteins from stress granules (SG) and P bodies (PB). Also participates in the sequestration of these remodeled organelles in viral factories. It depends on Mg(2+) as a cofactor. In terms of processing, O-glycosylated. Post-translationally, hyperphosphorylated on serine residues, when in dimeric form. Phosphorylation by host CK1 is required for the hyperphosphorylation of NSP5 dimer.

It localises to the host cytoplasm. Functionally, plays an essential role in the viral genome replication. Participates, together with NSP2, in the formation of viral factories (viroplasms), which are large inclusions in the host cytoplasm where replication intermediates are assembled and viral RNA replication takes place. Orchestrates the recruitment of viroplasmic proteins such as capsid proteins to these factories. Participates in the selective exclusion of host proteins from stress granules (SG) and P bodies (PB). Also participates in the sequestration of these remodeled organelles in viral factories. This is Non-structural protein 5 from Rotavirus A (isolate RVA/Human/Belgium/B4106/2000/G3P11[14]) (RV-A).